Here is a 316-residue protein sequence, read N- to C-terminus: 1-phosphofructokinase (316 aa).

ATP contacts are provided by residues 225-230 and 256-257; these read SMGAGG and GD. D257 (proton acceptor) is an active-site residue.

It belongs to the carbohydrate kinase PfkB family.

It carries out the reaction beta-D-fructose 1-phosphate + ATP = beta-D-fructose 1,6-bisphosphate + ADP + H(+). Catalyzes the ATP-dependent phosphorylation of fructose-l-phosphate to fructose-l,6-bisphosphate. This Rhodobacter capsulatus (Rhodopseudomonas capsulata) protein is 1-phosphofructokinase.